We begin with the raw amino-acid sequence, 339 residues long: Scoulerine-9-O-methyltransferase 3 (339 aa).

An S-adenosyl-L-methionine-binding site is contributed by Met161. Position 164 (Asp164) interacts with substrate. S-adenosyl-L-methionine contacts are provided by residues Thr165, Gly191, Asp214, 228 to 229 (DV), and Lys242. Residue 243–247 (SILHE) coordinates substrate. His246 (proton acceptor) is an active-site residue.

It belongs to the class I-like SAM-binding methyltransferase superfamily. Cation-independent O-methyltransferase family. COMT subfamily. As to quaternary structure, homodimer. Forms heterodimer with SOMT2. The heterodimer SOMT2-SOMT3 possesses 3-O-acetyl-4'-O-demethylpapaveroxine 4'-O-methyltransferase activity, where SOMT2 is the catalytic subunit. Highly expressed in capsules. Expressed is stems. Expressed at low levels in roots.

It carries out the reaction (S)-scoulerine + S-adenosyl-L-methionine = (S)-tetrahydrocolumbamine + S-adenosyl-L-homocysteine + H(+). The protein operates within alkaloid biosynthesis. Functionally, methyltransferase involved in the biosynthesis of the benzylisoquinoline alkaloid noscapine. Catalyzes the conversion of (S)-scoulerine to (S)-tetrahydrocolumbamine. This chain is Scoulerine-9-O-methyltransferase 3, found in Papaver somniferum (Opium poppy).